Consider the following 1238-residue polypeptide: Cryptic loci regulator protein 1 (1238 aa).

Disordered regions lie at residues 133–156, 196–237, 277–303, 546–568, 696–735, and 784–824; these read TQQQVSNVSHGNFKPNSSVNTEPN, PFSN…PSSI, ASLYDRSPSKKDITSSRNTSSYNLGSM, QKSVSSETTLVKPSSTSSYIDTT, SDNTDCSLPKPSNSKLSSISSDGDASSNRMAVPDKSPFVH, and TLKE…QSRS. The span at 214-223 shows a compositional bias: polar residues; that stretch reads NVKNNSKKTA. The span at 224–237 shows a compositional bias: low complexity; the sequence is SSVNSNHSSIPSSI. The span at 291–303 shows a compositional bias: polar residues; sequence SSRNTSSYNLGSM. Over residues 702-723 the composition is skewed to low complexity; the sequence is SLPKPSNSKLSSISSDGDASSN. The segment covering 785–796 has biased composition (basic and acidic residues); it reads LKEDASSTKQAK. Residues 810–819 are compositionally biased toward polar residues; it reads NDVSKNNSGE. A C2H2-type zinc finger spans residues 1062–1087; that stretch reads LNCEVSNCKKCFSNYEDMFKHLQHSH.

In terms of assembly, interacts with clr3.

It localises to the nucleus. It is found in the chromosome. The protein localises to the centromere. Its subcellular location is the telomere. Functionally, regulates silencing of the mat2 and mat3 loci. Organizes the chromatin structure of the mating-type region where it also participates in establishing the 'cold spot' for recombination. Required for proper positioning of nucleosomes at heterochromatic loci and for transcriptional gene silencing (TGS) function of the Snf2/Hdac-containing repressor complex (SHREC). This is Cryptic loci regulator protein 1 (clr1) from Schizosaccharomyces pombe (strain 972 / ATCC 24843) (Fission yeast).